The primary structure comprises 154 residues: D-aminoacyl-tRNA deacylase (154 aa).

The Gly-cisPro motif, important for rejection of L-amino acids signature appears at 142–143 (GP).

It belongs to the DTD family. As to quaternary structure, homodimer.

It is found in the cytoplasm. The catalysed reaction is glycyl-tRNA(Ala) + H2O = tRNA(Ala) + glycine + H(+). It carries out the reaction a D-aminoacyl-tRNA + H2O = a tRNA + a D-alpha-amino acid + H(+). An aminoacyl-tRNA editing enzyme that deacylates mischarged D-aminoacyl-tRNAs. Also deacylates mischarged glycyl-tRNA(Ala), protecting cells against glycine mischarging by AlaRS. Acts via tRNA-based rather than protein-based catalysis; rejects L-amino acids rather than detecting D-amino acids in the active site. By recycling D-aminoacyl-tRNA to D-amino acids and free tRNA molecules, this enzyme counteracts the toxicity associated with the formation of D-aminoacyl-tRNA entities in vivo and helps enforce protein L-homochirality. This is D-aminoacyl-tRNA deacylase from Polaromonas sp. (strain JS666 / ATCC BAA-500).